A 368-amino-acid polypeptide reads, in one-letter code: uncharacterized protein (368 aa).

This is an uncharacterized protein from Archaeoglobus fulgidus (strain ATCC 49558 / DSM 4304 / JCM 9628 / NBRC 100126 / VC-16).